The following is a 352-amino-acid chain: Fe(3+) ions import ATP-binding protein FbpC (352 aa).

Residues 5–239 enclose the ABC transporter domain; sequence LHIGHLSKSF…PADLDAVLFI (235 aa). 37–44 serves as a coordination point for ATP; it reads GASGCGKT.

The protein belongs to the ABC transporter superfamily. Fe(3+) ion importer (TC 3.A.1.10) family. As to quaternary structure, the complex is composed of two ATP-binding proteins (FbpC), two transmembrane proteins (FbpB) and a solute-binding protein (FbpA).

The protein resides in the cell inner membrane. The enzyme catalyses Fe(3+)(out) + ATP + H2O = Fe(3+)(in) + ADP + phosphate + H(+). Its function is as follows. Part of the ABC transporter complex FbpABC involved in Fe(3+) ions import. Responsible for energy coupling to the transport system. The polypeptide is Fe(3+) ions import ATP-binding protein FbpC (Neisseria gonorrhoeae).